Reading from the N-terminus, the 271-residue chain is Dioscorin dioA3 (271 aa).

An N-terminal signal peptide occupies residues 1–21 (MSSSTLLHLLLLSSLLFSCLS). One can recognise an Alpha-carbonic anhydrase domain in the interval 28–262 (DEFSYIEGNP…TNFRSVFYFE (235 aa)). C53 and C212 are oxidised to a cystine. H94 functions as the Proton acceptor in the catalytic mechanism. L-ascorbate is bound by residues D95, 120 to 122 (HFH), Q139, and 208 to 209 (TA).

It belongs to the alpha-carbonic anhydrase family. In terms of assembly, monomer. Homodimer. In terms of processing, not glycosylated. Expressed in tuber (at protein level).

It carries out the reaction hydrogencarbonate + H(+) = CO2 + H2O. The enzyme catalyses 2 monodehydro-L-ascorbate radical + NADH + H(+) = 2 L-ascorbate + NAD(+). Its activity is regulated as follows. The carbonate dehydratase activity is not substantially changed by the addition of Zn(2+). Storage protein of tuber. Involved in protection against oxidative stress. Has carbonate dehydratase, trypsin inhibitor, dehydroascorbate (DHA) reductase and monodehydroascorbate (MDA) reductase activities. Catalyzes the reactions of carbonate dehydratase and DHA reductase independently of zinc and glutathione (GSH). The coupled reaction is capable of recycling a plant antioxidant ascorbate using ubiquitous compounds H(2)O and CO(2). Exhibits antioxidant activity. Able to scavenge 1,1-diphenyl-2-picrylhydrazyl (DPPH) radical. Exhibits immunomodulatory activity. Activates Toll-like receptor 4 signaling pathways by up-regulating the gene expression of pro-inflammatory cytokines, such as tumor necrosis factor alpha, interleukin-1 beta and interleukin-6, and chemokines RANTES and MCP-1, in mouse RAW 264.7 macrophages. Stimulates the phagocytosis of E.coli by the LPS-treated mouse macrophages. This chain is Dioscorin dioA3, found in Dioscorea japonica (Japanese yam).